Reading from the N-terminus, the 271-residue chain is 3-methyl-2-oxobutanoate hydroxymethyltransferase (271 aa).

The Mg(2+) site is built by Asp-51 and Asp-90. 3-methyl-2-oxobutanoate is bound by residues 51–52, Asp-90, and Lys-118; that span reads DS. Glu-120 provides a ligand contact to Mg(2+). Glu-186 (proton acceptor) is an active-site residue.

It belongs to the PanB family. In terms of assembly, homodecamer; pentamer of dimers. Mg(2+) serves as cofactor.

It localises to the cytoplasm. It carries out the reaction 3-methyl-2-oxobutanoate + (6R)-5,10-methylene-5,6,7,8-tetrahydrofolate + H2O = 2-dehydropantoate + (6S)-5,6,7,8-tetrahydrofolate. It functions in the pathway cofactor biosynthesis; (R)-pantothenate biosynthesis; (R)-pantoate from 3-methyl-2-oxobutanoate: step 1/2. Its function is as follows. Catalyzes the reversible reaction in which hydroxymethyl group from 5,10-methylenetetrahydrofolate is transferred onto alpha-ketoisovalerate to form ketopantoate. The protein is 3-methyl-2-oxobutanoate hydroxymethyltransferase of Xanthomonas campestris pv. campestris (strain B100).